We begin with the raw amino-acid sequence, 177 residues long: Nucleoside triphosphate/diphosphate phosphatase (177 aa).

The Proton donor role is filled by R23. 6 residues coordinate Mg(2+): N87, D103, D105, D107, D120, and E123.

It belongs to the Ntdp family. Requires Mg(2+) as cofactor.

It catalyses the reaction a ribonucleoside 5'-triphosphate + H2O = a ribonucleoside 5'-diphosphate + phosphate + H(+). It carries out the reaction a ribonucleoside 5'-diphosphate + H2O = a ribonucleoside 5'-phosphate + phosphate + H(+). Has nucleoside phosphatase activity towards nucleoside triphosphates and nucleoside diphosphates. This chain is Nucleoside triphosphate/diphosphate phosphatase, found in Streptococcus gordonii (strain Challis / ATCC 35105 / BCRC 15272 / CH1 / DL1 / V288).